The chain runs to 164 residues: UPF0304 protein KPK_1463 (164 aa).

Belongs to the UPF0304 family.

This chain is UPF0304 protein KPK_1463, found in Klebsiella pneumoniae (strain 342).